The chain runs to 514 residues: MDTATTTCSAVDLSALLSSSSNSTSSLAAATFLCSQISNISNKLSDTTYAVDNTYLLFSAYLVFAMQLGFAMLCAGSVRAKNTMNIMLTNVLDAAAGAISYYLFGFAFAFGTPSNGFIGRHHSFFALSSYPERPGSDFSFFLYQWAFAIAAAGITSGSIAERTQFVAYLIYSTFLTGFVYPTVSHWFWSSDGWASASRSDNNLLFGSGAIDFAGSGVVHMVGGIAGLCGALVEGPRIGRFDRSGRSVALRGHSASLVVLGTFLLWFGWYGFNPGSFLTILKGYDKSRPYYGQWSAVGRTAVTTTLSGCTAALTTLFSKRLLAGHWNVIDVCNGLLGGFAAITSGCAVVEPWAAIVCGFVASWVLIGFNLLAKKLKYDDPLEAAQLHGGCGAWGLIFTGLFARKEYVNEIYSGDRPYGLFMGGGGKLLAAQIVQIIVIVGWVTVTMGPLFYGLHKMNLLRISAEDEMAGMDMTRHGGFAYAYNDEDDVSTKPWGHFAGRVEPTSRSSTPTPTLTV.

The next 11 membrane-spanning stretches (helical) occupy residues 56 to 76 (LLFS…LCAG), 91 to 111 (VLDA…FAFG), 140 to 160 (FFLY…GSIA), 165 to 185 (FVAY…TVSH), 212 to 232 (FAGS…GALV), 257 to 277 (VVLG…GSFL), 291 to 313 (GQWS…AALT), 328 to 348 (IDVC…CAVV), 351 to 371 (WAAI…NLLA), 380 to 400 (LEAA…TGLF), and 431 to 451 (IVQI…LFYG). Phosphothreonine is present on Thr-472.

It belongs to the ammonia transporter channel (TC 1.A.11.2) family. High expression in root.

Its subcellular location is the membrane. Its function is as follows. Ammonium transporter probably involved in ammonium uptake from the soil. This Arabidopsis thaliana (Mouse-ear cress) protein is Ammonium transporter 1 member 2 (AMT1-2).